A 100-amino-acid chain; its full sequence is Carboxysome shell vertex protein CcmL (100 aa).

Residues 1–83 enclose the BMV domain; sequence MQLAKVLGTV…LDAMVVGIID (83 aa).

It belongs to the CcmL/EutN family. CcmL subfamily. Homopentamer. Interacts with full-length CcmM.

It is found in the carboxysome. Probably forms vertices in the carboxysome, a polyhedral inclusion where RuBisCO (ribulose bisphosphate carboxylase, rbcL-rbcS) is sequestered. Has been modeled to induce curvature upon insertion into an otherwise flat hexagonal molecular layer of CcmK subunits. The sequence is that of Carboxysome shell vertex protein CcmL from Synechocystis sp. (strain ATCC 27184 / PCC 6803 / Kazusa).